Reading from the N-terminus, the 863-residue chain is Leucine--tRNA ligase (863 aa).

A 'HIGH' region motif is present at residues 40–51 (PYPSGAGLHVGH). The 'KMSKS' region signature appears at 635–639 (KMSKS). K638 serves as a coordination point for ATP.

It belongs to the class-I aminoacyl-tRNA synthetase family.

It is found in the cytoplasm. It carries out the reaction tRNA(Leu) + L-leucine + ATP = L-leucyl-tRNA(Leu) + AMP + diphosphate. The protein is Leucine--tRNA ligase of Leptospira interrogans serogroup Icterohaemorrhagiae serovar Lai (strain 56601).